Here is a 105-residue protein sequence, read N- to C-terminus: Small ribosomal subunit protein uS10 (105 aa).

The protein belongs to the universal ribosomal protein uS10 family. In terms of assembly, part of the 30S ribosomal subunit.

Its function is as follows. Involved in the binding of tRNA to the ribosomes. This is Small ribosomal subunit protein uS10 from Lawsonia intracellularis (strain PHE/MN1-00).